The chain runs to 331 residues: ADP,ATP carrier protein 1, mitochondrial (331 aa).

Solcar repeat units follow at residues 29–122, 134–226, and 238–320; these read KNFA…FKRM, KWFG…LKPV, and ASFA…LQIL. A run of 5 helical transmembrane segments spans residues 31–58, 99–123, 132–152, 202–223, and 237–257; these read FAID…VKLL, TANV…KRMF, YWKW…SSLF, FNIS…YDSL, and FASF…SYPI. ADP-binding residues include R104 and K116. Residue R261 coordinates ADP. The segment at 261-266 is important for transport activity; sequence RRRMMM. A Nucleotide carrier signature motif motif is present at residues 261-266; it reads RRRMMM. Residues 297 to 317 traverse the membrane as a helical segment; that stretch reads AGANILRAIAGAGVLSGYDQL.

Belongs to the mitochondrial carrier (TC 2.A.29) family. In terms of assembly, monomer.

Its subcellular location is the mitochondrion inner membrane. The catalysed reaction is ADP(in) + ATP(out) = ADP(out) + ATP(in). The matrix-open state (m-state) is inhibited by the membrane-permeable bongkrekic acid (BKA). The cytoplasmic-open state (c-state) is inhibited by the membrane-impermeable toxic inhibitor carboxyatractyloside (CATR). ADP:ATP antiporter that mediates import of ADP into the mitochondrial matrix for ATP synthesis, and export of ATP out to fuel the cell. Cycles between the cytoplasmic-open state (c-state) and the matrix-open state (m-state): operates by the alternating access mechanism with a single substrate-binding site intermittently exposed to either the cytosolic (c-state) or matrix (m-state) side of the inner mitochondrial membrane. The chain is ADP,ATP carrier protein 1, mitochondrial (ANT-G1) from Triticum aestivum (Wheat).